Here is a 511-residue protein sequence, read N- to C-terminus: Protein phosphatase 2C 7 (511 aa).

Positions M1–C19 are cleaved as a signal peptide. Positions L188–L501 constitute a PPM-type phosphatase domain. Residues D242, G243, D432, and D492 each coordinate Mn(2+).

The protein belongs to the PP2C family. In terms of assembly, interacts with PYL13. Requires Mg(2+) as cofactor. Mn(2+) serves as cofactor. Expressed in seeds.

It carries out the reaction O-phospho-L-seryl-[protein] + H2O = L-seryl-[protein] + phosphate. The enzyme catalyses O-phospho-L-threonyl-[protein] + H2O = L-threonyl-[protein] + phosphate. Its function is as follows. Key component and repressor of the abscisic acid (ABA) signaling pathway that regulates numerous ABA responses, such as stomatal closure, seed germination and inhibition of vegetative growth. The protein is Protein phosphatase 2C 7 (HAB2) of Arabidopsis thaliana (Mouse-ear cress).